The following is a 162-amino-acid chain: Endoribonuclease YbeY (162 aa).

Residues His-117, His-121, and His-127 each coordinate Zn(2+).

It belongs to the endoribonuclease YbeY family. It depends on Zn(2+) as a cofactor.

It localises to the cytoplasm. Its function is as follows. Single strand-specific metallo-endoribonuclease involved in late-stage 70S ribosome quality control and in maturation of the 3' terminus of the 16S rRNA. The chain is Endoribonuclease YbeY from Francisella tularensis subsp. holarctica (strain OSU18).